Reading from the N-terminus, the 304-residue chain is Acetyl-coenzyme A carboxylase carboxyl transferase subunit beta (304 aa).

Residues 23-292 (VWTKCDSCGQ…PNPEAPREGV (270 aa)) form the CoA carboxyltransferase N-terminal domain. Zn(2+) contacts are provided by Cys27, Cys30, Cys46, and Cys49. Residues 27–49 (CDSCGQVLYRAELERNLEVCPKC) form a C4-type zinc finger. The segment at 284-304 (NPEAPREGVVVPPVPDQEPEA) is disordered. The span at 295–304 (PPVPDQEPEA) shows a compositional bias: pro residues.

Belongs to the AccD/PCCB family. In terms of assembly, acetyl-CoA carboxylase is a heterohexamer composed of biotin carboxyl carrier protein (AccB), biotin carboxylase (AccC) and two subunits each of ACCase subunit alpha (AccA) and ACCase subunit beta (AccD). Requires Zn(2+) as cofactor.

It localises to the cytoplasm. It catalyses the reaction N(6)-carboxybiotinyl-L-lysyl-[protein] + acetyl-CoA = N(6)-biotinyl-L-lysyl-[protein] + malonyl-CoA. It participates in lipid metabolism; malonyl-CoA biosynthesis; malonyl-CoA from acetyl-CoA: step 1/1. Functionally, component of the acetyl coenzyme A carboxylase (ACC) complex. Biotin carboxylase (BC) catalyzes the carboxylation of biotin on its carrier protein (BCCP) and then the CO(2) group is transferred by the transcarboxylase to acetyl-CoA to form malonyl-CoA. This Shigella boydii serotype 18 (strain CDC 3083-94 / BS512) protein is Acetyl-coenzyme A carboxylase carboxyl transferase subunit beta.